Consider the following 414-residue polypeptide: Tryptophan synthase beta chain (414 aa).

Lysine 108 carries the N6-(pyridoxal phosphate)lysine modification.

This sequence belongs to the TrpB family. As to quaternary structure, tetramer of two alpha and two beta chains. Pyridoxal 5'-phosphate serves as cofactor.

It carries out the reaction (1S,2R)-1-C-(indol-3-yl)glycerol 3-phosphate + L-serine = D-glyceraldehyde 3-phosphate + L-tryptophan + H2O. The protein operates within amino-acid biosynthesis; L-tryptophan biosynthesis; L-tryptophan from chorismate: step 5/5. In terms of biological role, the beta subunit is responsible for the synthesis of L-tryptophan from indole and L-serine. In Beijerinckia indica subsp. indica (strain ATCC 9039 / DSM 1715 / NCIMB 8712), this protein is Tryptophan synthase beta chain.